An 826-amino-acid chain; its full sequence is Villin-1 (826 aa).

Residues 1-734 (MVELSKKVTG…YDELKAELGD (734 aa)) form a core region. The Gelsolin-like 1 repeat unit spans residues 27–76 (MEMVPVPTKSYGNFYEGDCYVLLSTRKTGSGFSYNIHYWLGKNSSQDEQG). A 1,2-diacyl-sn-glycero-3-phospho-(1D-myo-inositol-4,5-bisphosphate) is bound at residue 112 to 119 (KQGLIYKQ). The segment at 129–137 (VETNTYNVQ) is crucial for binding an actin filament. An a 1,2-diacyl-sn-glycero-3-phospho-(1D-myo-inositol-4,5-bisphosphate)-binding site is contributed by 138 to 146 (RLLHVKGKK). 5 Gelsolin-like repeats span residues 148 to 188 (VVAA…AERL), 265 to 309 (LVIQ…EEKQ), 408 to 457 (QELV…DELA), 528 to 568 (TKAF…DERE), and 631 to 672 (FLAT…SEKE). The interval 735-826 (NASIGQLVSG…QNLKKEKGLF (92 aa)) is headpiece. Positions 760–826 (PTKLETFPLD…QNLKKEKGLF (67 aa)) constitute an HP domain. An absolutely required for activity region spans residues 820-823 (KKEK).

This sequence belongs to the villin/gelsolin family. As to quaternary structure, monomer. Homodimer. Associates with F-actin; the association with F-actin is inhibited by tropomyosin. Post-translationally, phosphorylated on tyrosine residues. The unphosphorylated form increases the initial rate of actin-nucleating activity, whereas the tyrosine-phosphorylated form inhibits actin-nucleating activity, enhances actin-bundling activity and enhances actin-severing activity by reducing high Ca(2+) requirements. The tyrosine-phosphorylated form does not regulate actin-capping activity. Tyrosine phosphorylation is essential for cell migration: tyrosine phosphorylation sites in the N-terminus half regulate actin reorganization and cell morphology, whereas tyrosine phosphorylation sites in the C-terminus half regulate cell migration. Tyrosine phosphorylation is induced by epidermal growth factor (EGF) and stimulates cell migration. Specifically expressed in epithelial cells. Component of brush border microvilli.

Its subcellular location is the cytoplasm. The protein resides in the cytoskeleton. It is found in the cell projection. The protein localises to the microvillus. It localises to the lamellipodium. Its subcellular location is the ruffle. The protein resides in the filopodium tip. It is found in the filopodium. Functionally, epithelial cell-specific Ca(2+)-regulated actin-modifying protein that modulates the reorganization of microvillar actin filaments. Plays a role in the actin nucleation, actin filament bundle assembly, actin filament capping and severing. Binds phosphatidylinositol 4,5-bisphosphate (PIP2) and lysophosphatidic acid (LPA); binds LPA with higher affinity than PIP2. Binding to LPA increases its phosphorylation by SRC and inhibits all actin-modifying activities. Binding to PIP2 inhibits actin-capping and -severing activities but enhances actin-bundling activity. Regulates the intestinal epithelial cell morphology, cell invasion, cell migration and apoptosis. Protects against apoptosis induced by dextran sodium sulfate (DSS) in the gastrointestinal epithelium. Appears to regulate cell death by maintaining mitochondrial integrity. Enhances hepatocyte growth factor (HGF)-induced epithelial cell motility, chemotaxis and wound repair. Its actin-bundling activity is inhibited by tropomyosin. The sequence is that of Villin-1 (VIL1) from Gallus gallus (Chicken).